Here is a 963-residue protein sequence, read N- to C-terminus: Aminopeptidase N (963 aa).

Over 2 to 8 the chain is Cytoplasmic; it reads AKGFYIS. The chain crosses the membrane as a helical; Signal-anchor for type II membrane protein span at residues 9–32; sequence KALGILGILLGVAAVATIIALSVV. A cytosolic Ser/Thr-rich junction region spans residues 33–64; that stretch reads YAQEKNKNAEHVPQAPTSPTITTTAAITLDQS. Residues 33–963 lie on the Extracellular side of the membrane; it reads YAQEKNKNAE…VVLNWFIEHS (931 aa). Positions 65-963 are metalloprotease; it reads KPWNRYRLPT…VVLNWFIEHS (899 aa). Residues Asn-82 and Asn-124 are each glycosylated (N-linked (GlcNAc...) asparagine). Residue Tyr-171 is modified to Sulfotyrosine. Residues Asn-229, Asn-237, Asn-258, Asn-286, Asn-314, and Asn-328 are each glycosylated (N-linked (GlcNAc...) asparagine). Substrate is bound at residue 347-351; that stretch reads GAMEN. Position 383 (His-383) interacts with Zn(2+). The active-site Proton acceptor is Glu-384. Positions 387 and 406 each coordinate Zn(2+). 6 N-linked (GlcNAc...) asparagine glycosylation sites follow: Asn-506, Asn-556, Asn-569, Asn-622, Asn-646, and Asn-736. Positions 717–813 are interaction with TGEV spike glycoprotein; sequence KYLRKQVEPL…DQWDFAWGQL (97 aa). 2 disulfide bridges follow: Cys-758/Cys-765 and Cys-795/Cys-831.

It belongs to the peptidase M1 family. Homodimer. Interacts with SLC6A19. As to quaternary structure, (Microbial infection) Interacts with TGEV and PRCoV spike glycoprotein. Zn(2+) is required as a cofactor. Sulfated. In terms of processing, N- and O-glycosylated. Post-translationally, may undergo proteolysis and give rise to a soluble form.

The protein localises to the cell membrane. It carries out the reaction Release of an N-terminal amino acid, Xaa-|-Yaa- from a peptide, amide or arylamide. Xaa is preferably Ala, but may be most amino acids including Pro (slow action). When a terminal hydrophobic residue is followed by a prolyl residue, the two may be released as an intact Xaa-Pro dipeptide.. Functionally, broad specificity aminopeptidase which plays a role in the final digestion of peptides generated from hydrolysis of proteins by gastric and pancreatic proteases. Also involved in the processing of various peptides including peptide hormones, such as angiotensin III and IV, neuropeptides, and chemokines. May also be involved the cleavage of peptides bound to major histocompatibility complex class II molecules of antigen presenting cells. May have a role in angiogenesis and promote cholesterol crystallization. It is able to degrade Leu-enkephalin and Met-enkephalin but not cholecystokinin CCK8, neuromedin C (GRP-10), somatostatin-14, substance P and vasoactive intestinal peptide. May have a role in amino acid transport by acting as binding partner of amino acid transporter SLC6A19 and regulating its activity. Its function is as follows. (Microbial infection) In case of porcine transmissible gastroenteritis coronavirus (TGEV) and porcine respiratory coronavirus (PRCoV) infections, serves as a receptor for TGEV and PRCoV spike glycoprotein in a species-specific manner. This is Aminopeptidase N (ANPEP) from Sus scrofa (Pig).